The following is an 82-amino-acid chain: Omega-conotoxin-like Am6.2 (82 aa).

An N-terminal signal peptide occupies residues 1–22 (MKLTCMMIVAVLFLTAWTFVTA). The propeptide occupies 23–52 (VPHSSNVLENLYLKARHEMENQEASKLNMR). 3 cysteine pairs are disulfide-bonded: C56/C73, C63/C77, and C72/C81. Position 76 is a 6'-bromotryptophan; partial; in Am6.2b (major form) (W76).

This sequence belongs to the conotoxin O1 family. In terms of processing, mostly non-hydroxylated. Two forms of this peptides have been described. Am6.2a (Am3136) is not unmodified, while Am6.2b (Am3214) is Trp-76 brominated. Both forms are found in venom with a much more abundant brominated form. In terms of tissue distribution, expressed by the venom duct.

The protein localises to the secreted. Functionally, omega-conotoxins act at presynaptic membranes, they bind and block voltage-gated calcium channels (Cav). The chain is Omega-conotoxin-like Am6.2 from Conus amadis (Amadis cone).